Consider the following 126-residue polypeptide: Large ribosomal subunit protein bL17 (126 aa).

This sequence belongs to the bacterial ribosomal protein bL17 family. As to quaternary structure, part of the 50S ribosomal subunit. Contacts protein L32.

The sequence is that of Large ribosomal subunit protein bL17 from Aliivibrio salmonicida (strain LFI1238) (Vibrio salmonicida (strain LFI1238)).